Here is a 298-residue protein sequence, read N- to C-terminus: MQFEKMITEGSNTASAEIDRVSTLEMCRIINDEDKTVPLAVERVLPDIAAAIDVIHAQVSGGGRLIYLGAGTSGRLGILDASECPPTYGVKPGLVVGLIAGGEYAIQHAVEGAEDSREGGVNDLKNINLTAQDVVVGIAASGRTPYVIAGLEYARQLGCRTVGISCNPGSAVSTTAEFAITPIVGAEVVTGSSRMKAGTAQKLVLNMLSTGLMIKSGKVFGNLMVDVVATNEKLHVRQVNIVKNATGCSAEQAEAALIACERNCKTAIVMVLKNLDAAEAKKRLDQHGGFIRQVLDKE.

Residues 55 to 218 (IHAQVSGGGR…STGLMIKSGK (164 aa)) form the SIS domain. Glu83 acts as the Proton donor in catalysis. The active site involves Glu114.

It belongs to the GCKR-like family. MurNAc-6-P etherase subfamily. Homodimer.

It carries out the reaction N-acetyl-D-muramate 6-phosphate + H2O = N-acetyl-D-glucosamine 6-phosphate + (R)-lactate. It functions in the pathway amino-sugar metabolism; N-acetylmuramate degradation. The protein operates within amino-sugar metabolism; 1,6-anhydro-N-acetylmuramate degradation. It participates in cell wall biogenesis; peptidoglycan recycling. Functionally, specifically catalyzes the cleavage of the D-lactyl ether substituent of MurNAc 6-phosphate, producing GlcNAc 6-phosphate and D-lactate. Together with AnmK, is also required for the utilization of anhydro-N-acetylmuramic acid (anhMurNAc) either imported from the medium or derived from its own cell wall murein, and thus plays a role in cell wall recycling. This is N-acetylmuramic acid 6-phosphate etherase from Escherichia coli (strain K12 / MC4100 / BW2952).